Here is a 440-residue protein sequence, read N- to C-terminus: Heat stress transcription factor A-4b (440 aa).

The stretch at 121–181 (NERKDYEEEI…QRSLISYVRE (61 aa)) forms a coiled coil. The segment at 133-183 (LKSDNAALSSELQNNTLKKLNMEKRMQALEEKLFVVEDQQRSLISYVREIV) is hydrophobic repeat HR-A/B. The Nuclear export signal motif lies at 158 to 163 (MQALEE). A Nuclear localization signal motif is present at residues 200 to 204 (RKKRR). Residues 264–417 (DISYDDGVPG…EMKSGDRQHL (154 aa)) are disordered. The span at 295-305 (SPPTRMRTSSA) shows a compositional bias: polar residues. A compositionally biased stretch (basic and acidic residues) spans 333–343 (SRVDTRAKVSE). The short motif at 375 to 384 (DGFWQQFLTE) is the AHA element. Positions 380 to 390 (QFLTEQPGSSD) are enriched in polar residues. A compositionally biased stretch (basic and acidic residues) spans 391 to 417 (AHQEAQSERRDGGNKVDEMKSGDRQHL).

Belongs to the HSF family. Class A subfamily. As to quaternary structure, homotrimer. Post-translationally, exhibits temperature-dependent phosphorylation.

Its subcellular location is the cytoplasm. The protein localises to the nucleus. Functionally, transcriptional regulator that specifically binds DNA of heat shock promoter elements (HSE). The protein is Heat stress transcription factor A-4b (HSFA4B) of Oryza sativa subsp. japonica (Rice).